Here is a 62-residue protein sequence, read N- to C-terminus: Metallothionein-like protein 3A (62 aa).

This sequence belongs to the metallothionein superfamily. Type 15 family.

Its function is as follows. Metallothioneins have a high content of cysteine residues that bind various heavy metals. This chain is Metallothionein-like protein 3A (MT3A), found in Oryza sativa subsp. indica (Rice).